The sequence spans 425 residues: NAC domain-containing protein 10 (425 aa).

Residues M1–S10 are compositionally biased toward polar residues. Positions M1–R34 are disordered. The span at P12–P23 shows a compositional bias: low complexity. The region spanning L29–K200 is the NAC domain. Residues V129 to A206 mediate DNA binding.

Highest expression in stamens. Expressed in leaves.

The protein resides in the nucleus. Functionally, transcription factor of the NAC family associated with male fertility. Involved in anther development, but not in senescence. Reduced expression of NAC5 via RNAi leads to male-sterility. The protein is NAC domain-containing protein 10 of Oryza sativa subsp. japonica (Rice).